Reading from the N-terminus, the 326-residue chain is Probable cell division protein WhiA (326 aa).

The H-T-H motif DNA-binding region spans Ser275–Arg308.

The protein belongs to the WhiA family.

In terms of biological role, involved in cell division and chromosome segregation. The chain is Probable cell division protein WhiA from Salinispora tropica (strain ATCC BAA-916 / DSM 44818 / JCM 13857 / NBRC 105044 / CNB-440).